A 1482-amino-acid chain; its full sequence is Chromosome partition protein MukB (1482 aa).

Position 34-41 (34-41) interacts with ATP; the sequence is GGNGAGKS. Coiled coils occupy residues 337 to 468, 509 to 604, 780 to 805, 835 to 1044, 1070 to 1115, and 1210 to 1265; these read LNLV…LSVA, QHLA…APIW, RAAR…ATLS, EAEI…ELVD, TNRA…TAKA, and EAIE…LQAV. The interval 666–783 is flexible hinge; the sequence is PGGAEDQRLV…AVPLFGRAAR (118 aa).

This sequence belongs to the SMC family. MukB subfamily. As to quaternary structure, homodimerization via its hinge domain. Binds to DNA via its C-terminal region. Interacts, and probably forms a ternary complex, with MukE and MukF via its C-terminal region. The complex formation is stimulated by calcium or magnesium. Interacts with tubulin-related protein FtsZ.

Its subcellular location is the cytoplasm. It is found in the nucleoid. Its function is as follows. Plays a central role in chromosome condensation, segregation and cell cycle progression. Functions as a homodimer, which is essential for chromosome partition. Involved in negative DNA supercoiling in vivo, and by this means organize and compact chromosomes. May achieve or facilitate chromosome segregation by condensation DNA from both sides of a centrally located replisome during cell division. The sequence is that of Chromosome partition protein MukB from Serratia proteamaculans (strain 568).